We begin with the raw amino-acid sequence, 307 residues long: MSSTPIKHYLQFSDFTPDEYEYLLDRARILKAKFKNYETWHPLHDRTLAMIFEKNSTRTRLSFEAGIHQLGGHAVFLNTRDSQLGRGEPIEDAAQVISRMVDIIMIRTFGQDIIDRFAAHSRVPVINGLTNEYHPCQVLADVFTYIEQRGSIRGKTVAWIGDANNMAYTWIQAAERLGFTFHFSAPPGYQLDPVMVPASASGLVKVFDDPLAACQGASLVTTDVWTSMGFEAENDARKRAFKDWMVTTAMMDRAEPDALFMHCLPAHRGEEVEAAVIDGPKSVVWDEAENRLHVQKALMEYLLCGRY.

Residues 56 to 59, Q83, R107, and 134 to 137 contribute to the carbamoyl phosphate site; these read STRT and HPCQ. Residues N165, D223, and 227 to 228 contribute to the L-ornithine site; that span reads SM. Residues 263 to 264 and R291 each bind carbamoyl phosphate; that span reads CL.

Belongs to the aspartate/ornithine carbamoyltransferase superfamily. OTCase family.

Its subcellular location is the cytoplasm. The enzyme catalyses carbamoyl phosphate + L-ornithine = L-citrulline + phosphate + H(+). Its pathway is amino-acid degradation; L-arginine degradation via ADI pathway; carbamoyl phosphate from L-arginine: step 2/2. Reversibly catalyzes the transfer of the carbamoyl group from carbamoyl phosphate (CP) to the N(epsilon) atom of ornithine (ORN) to produce L-citrulline. The polypeptide is Ornithine carbamoyltransferase (Cupriavidus taiwanensis (strain DSM 17343 / BCRC 17206 / CCUG 44338 / CIP 107171 / LMG 19424 / R1) (Ralstonia taiwanensis (strain LMG 19424))).